Here is a 631-residue protein sequence, read N- to C-terminus: Phosphomethylpyrimidine synthase (631 aa).

Substrate is bound by residues Asn239, Met268, Tyr297, His333, 353–355 (SRG), 394–397 (DGLR), and Glu433. His437 is a binding site for Zn(2+). Position 460 (Tyr460) interacts with substrate. Residue His501 participates in Zn(2+) binding. Residues Cys581, Cys584, and Cys589 each contribute to the [4Fe-4S] cluster site.

This sequence belongs to the ThiC family. Homodimer. It depends on [4Fe-4S] cluster as a cofactor.

The enzyme catalyses 5-amino-1-(5-phospho-beta-D-ribosyl)imidazole + S-adenosyl-L-methionine = 4-amino-2-methyl-5-(phosphooxymethyl)pyrimidine + CO + 5'-deoxyadenosine + formate + L-methionine + 3 H(+). Its pathway is cofactor biosynthesis; thiamine diphosphate biosynthesis. In terms of biological role, catalyzes the synthesis of the hydroxymethylpyrimidine phosphate (HMP-P) moiety of thiamine from aminoimidazole ribotide (AIR) in a radical S-adenosyl-L-methionine (SAM)-dependent reaction. This Salmonella heidelberg (strain SL476) protein is Phosphomethylpyrimidine synthase.